Here is an 816-residue protein sequence, read N- to C-terminus: Chitin synthase 1 (816 aa).

The segment at 1–21 (MLSQGEILRNPSRTRLQRPPK) is disordered. Residues 1–32 (MLSQGEILRNPSRTRLQRPPKSRSERKGWWYR) are Cytoplasmic-facing. Residues 33 to 53 (VTIFLTCLIPNFMLRCFGMTT) traverse the membrane as a helical segment. Residues 54–63 (PEVQHAWREK) lie on the Extracellular side of the membrane. A helical transmembrane segment spans residues 64-84 (VALCICIFFCWIILGFTTYGM). Residues 85 to 240 (NTIICKGSNQ…TPGCLLADTM (156 aa)) are Cytoplasmic-facing. A helical transmembrane segment spans residues 241-261 (FWITTISIFGLIITKFLLGFF). Residues 262–697 (YSWYAKRRPK…QLVVVMELFG (436 aa)) lie on the Extracellular side of the membrane. N-linked (GlcNAc...) asparagine glycans are attached at residues Asn319 and Asn664. The chain crosses the membrane as a helical span at residues 698–718 (TLVLPAAIIFTFVMIAVSILI). At 719 to 720 (EP) the chain is on the cytoplasmic side. The chain crosses the membrane as a helical span at residues 721–741 (AWVPLIMLVGIFGLPAVLILI). Residues 742–745 (TTME) lie on the Extracellular side of the membrane. The helical transmembrane segment at 746–766 (IQYVFWCLVYILSIPIWNFVL) threads the bilayer. Residues 767 to 816 (PTYAFWHFDNFSWGDTRKVDGEGKEDEEGEFDHTKIRIRELEEFLSEANK) are Cytoplasmic-facing.

This sequence belongs to the chitin synthase family. Class IV subfamily.

It is found in the cell membrane. It carries out the reaction [(1-&gt;4)-N-acetyl-beta-D-glucosaminyl](n) + UDP-N-acetyl-alpha-D-glucosamine = [(1-&gt;4)-N-acetyl-beta-D-glucosaminyl](n+1) + UDP + H(+). In terms of biological role, polymerizes chitin, a structural polymer of the cell wall and septum, by transferring the sugar moiety of UDP-GlcNAc to the non-reducing end of the growing chitin polymer. This is Chitin synthase 1 (CHS1) from Encephalitozoon cuniculi (strain GB-M1) (Microsporidian parasite).